Here is a 593-residue protein sequence, read N- to C-terminus: Probable translation initiation factor IF-2 (593 aa).

A tr-type G domain is found at 7-221 (IRTPIVCVMG…VLIGLAQRYM (215 aa)). Positions 16–23 (GHVDHGKT) are G1. A GTP-binding site is contributed by 16–23 (GHVDHGKT). Residues 41–45 (EITQH) form a G2 region. The interval 77-80 (DTPG) is G3. Residues 77–81 (DTPGH) and 131–134 (NKVD) contribute to the GTP site. The tract at residues 131 to 134 (NKVD) is G4. The segment at 199–201 (SAL) is G5.

It belongs to the TRAFAC class translation factor GTPase superfamily. Classic translation factor GTPase family. IF-2 subfamily.

In terms of biological role, function in general translation initiation by promoting the binding of the formylmethionine-tRNA to ribosomes. Seems to function along with eIF-2. The chain is Probable translation initiation factor IF-2 from Methanoculleus marisnigri (strain ATCC 35101 / DSM 1498 / JR1).